The chain runs to 633 residues: E3 ubiquitin-protein ligase ZSWIM2 (633 aa).

The SWIM-type zinc-finger motif lies at 54-87 (FRVFLGNPHVCNCSTFPKGGELCKHICWVLLKKF). The RING-type 1 zinc finger occupies 147–198 (CSICQELLLEKKLPVTFCRFGCGNSIHIKCMKILANYQSTSNTSMLKCPLCR). The ZZ-type zinc-finger motif lies at 229–280 (HLGIPCNNCKQFPIEGKCYKCTECIEYHLCQECFDSCCHLSHTFTFREKRNQ). Positions 234, 237, 249, 252, 258, 261, 267, and 270 each coordinate Zn(2+). Residues 344–388 (CLLCLKAFHLGQHTRLLPCTHKFHRKCIDNWLFHKCNSCPIDGQV) form an RING-type 2 zinc finger.

As to quaternary structure, dimer. Interacts with UBE2D1. Post-translationally, polyubiquitinated. Polyubiquitination is followed by degradation via the proteasome. Expression is testis-specific.

The catalysed reaction is S-ubiquitinyl-[E2 ubiquitin-conjugating enzyme]-L-cysteine + [acceptor protein]-L-lysine = [E2 ubiquitin-conjugating enzyme]-L-cysteine + N(6)-ubiquitinyl-[acceptor protein]-L-lysine.. Its function is as follows. E3 ubiquitin-protein ligase involved in the regulation of Fas-, DR3- and DR4-mediated apoptosis. Functions in conjunction with the UBE2D1, UBE2D3 and UBE2E1 E2 ubiquitin-conjugating enzymes. The polypeptide is E3 ubiquitin-protein ligase ZSWIM2 (Homo sapiens (Human)).